Here is a 319-residue protein sequence, read N- to C-terminus: BTB/POZ domain-containing adapter for CUL3-mediated RhoA degradation protein 2 (319 aa).

One can recognise a BTB domain in the interval 31 to 99; sequence KYIRLNVGGC…LRDDTIALPK (69 aa).

Belongs to the BACURD family. As to quaternary structure, component of the BCR(TNFAIP1) E3 ubiquitin ligase complex, at least composed of cul3, tnfaip1/bacurd2 and rbx1.

The protein resides in the cytoplasm. It localises to the nucleus. The protein localises to the endosome. Its pathway is protein modification; protein ubiquitination. In terms of biological role, substrate-specific adapter of a BCR (BTB-CUL3-RBX1) E3 ubiquitin-protein ligase complex involved in regulation of cytoskeleton structure. The BCR(TNFAIP1) E3 ubiquitin ligase complex mediates the ubiquitination of target proteins, leading to their degradation by the proteasome. In Xenopus laevis (African clawed frog), this protein is BTB/POZ domain-containing adapter for CUL3-mediated RhoA degradation protein 2 (tnfaip1).